We begin with the raw amino-acid sequence, 115 residues long: Large ribosomal subunit protein bL19 (115 aa).

It belongs to the bacterial ribosomal protein bL19 family.

This protein is located at the 30S-50S ribosomal subunit interface and may play a role in the structure and function of the aminoacyl-tRNA binding site. This Kosmotoga olearia (strain ATCC BAA-1733 / DSM 21960 / TBF 19.5.1) protein is Large ribosomal subunit protein bL19.